The sequence spans 351 residues: Cytosolic sulfotransferase 11 (351 aa).

98-103 is a binding site for 3'-phosphoadenylyl sulfate; it reads KGGTTW. The active-site Proton acceptor is His163. 3'-phosphoadenylyl sulfate-binding positions include Arg184, Ser192, Tyr250, and 316-318; that span reads RKG.

It belongs to the sulfotransferase 1 family.

It localises to the cytoplasm. Functionally, sulfotransferase that utilizes 3'-phospho-5'-adenylyl sulfate (PAPS) as sulfonate donor. This chain is Cytosolic sulfotransferase 11 (SOT11), found in Arabidopsis thaliana (Mouse-ear cress).